The following is a 178-amino-acid chain: MSRIGKLPIAIPSGVEVKVGTEAVEVKGPKGVLVTPTHTELNYAVEDGHVVITRATETRTARAQHGLRRTLLANCIQGVTKGFSKTLEVIGVGYKVAVKGNLVELAVGFSHPVIMEMPEGVEAKVEGQKLTISGTSKEVVGEIAARIRRVRKPEPYKGKGIKYDNEQIRRKAGKSGGK.

Positions Pro155–Arg169 are enriched in basic and acidic residues. A disordered region spans residues Pro155 to Lys178.

This sequence belongs to the universal ribosomal protein uL6 family. As to quaternary structure, part of the 50S ribosomal subunit.

In terms of biological role, this protein binds to the 23S rRNA, and is important in its secondary structure. It is located near the subunit interface in the base of the L7/L12 stalk, and near the tRNA binding site of the peptidyltransferase center. The polypeptide is Large ribosomal subunit protein uL6 (Nitratidesulfovibrio vulgaris (strain DSM 19637 / Miyazaki F) (Desulfovibrio vulgaris)).